The primary structure comprises 122 residues: Large ribosomal subunit protein uL14 (122 aa).

Belongs to the universal ribosomal protein uL14 family. Part of the 50S ribosomal subunit. Forms a cluster with proteins L3 and L19. In the 70S ribosome, L14 and L19 interact and together make contacts with the 16S rRNA in bridges B5 and B8.

Functionally, binds to 23S rRNA. Forms part of two intersubunit bridges in the 70S ribosome. The chain is Large ribosomal subunit protein uL14 from Beijerinckia indica subsp. indica (strain ATCC 9039 / DSM 1715 / NCIMB 8712).